The primary structure comprises 760 residues: Transferrin receptor protein 1 (760 aa).

Over 1-67 the chain is Cytoplasmic; that stretch reads MMDQARSAFS…KPKRCSGSIC (67 aa). The mediates interaction with SH3BP4 stretch occupies residues 1–67; it reads MMDQARSAFS…KPKRCSGSIC (67 aa). 2 positions are modified to phosphoserine: Ser-10 and Ser-19. At Tyr-20 the chain carries Phosphotyrosine. The Endocytosis signal motif lies at 20-23; it reads YTRF. Thr-21 carries the phosphothreonine modification. At Ser-24 the chain carries Phosphoserine. A Stop-transfer sequence motif is present at residues 58–61; sequence KPKR. Residues Cys-62 and Cys-67 are each lipidated (S-palmitoyl cysteine). The chain crosses the membrane as a helical; Signal-anchor for type II membrane protein span at residues 68 to 88; it reads YGTIAVIVFFLIGFMIGYLGY. The Extracellular segment spans residues 89 to 760; sequence CKGVEPKTEC…GDVWDIDNEF (672 aa). Thr-104 carries O-linked (GalNAc...) threonine glycosylation. Residues 223 to 313 enclose the PA domain; that stretch reads SKAATVTGKL…GTGDPYTPGF (91 aa). 2 N-linked (GlcNAc...) asparagine glycosylation sites follow: Asn-251 and Asn-317. The ligand-binding stretch occupies residues 569 to 760; that stretch reads TMDTYKELIE…GDVWDIDNEF (192 aa). The Cell attachment site; required for binding to transferrin motif lies at 646–648; it reads RGD. The N-linked (GlcNAc...) asparagine glycan is linked to Asn-727.

This sequence belongs to the peptidase M28 family. M28B subfamily. Homodimer; disulfide-linked. Binds one transferrin or HFE molecule per subunit. Binds the HLA class II histocompatibility antigen, DR1. Interacts with SH3BP3. Interacts with STEAP3; facilitates TFRC endocytosis in erythroid precursor cells. Interacts with GRM2. In terms of assembly, (Microbial infection) Interacts with Guanarito, Junin and Machupo arenavirus glycoprotein complex. As to quaternary structure, (Microbial infection) Interacts with rabies virus protein G. (Microbial infection) Interacts with SARS-CoV-2 spike protein S. Stearoylated by ZDHHC6 which inhibits TFRC-mediated activation of the JNK pathway and promotes mitochondrial fragmentation. Stearoylation does not affect iron uptake. Post-translationally, N- and O-glycosylated, phosphorylated and palmitoylated. The serum form is only glycosylated. In terms of processing, proteolytically cleaved on Arg-100 to produce the soluble serum form (sTfR). Palmitoylated on both Cys-62 and Cys-67. Cys-62 seems to be the major site of palmitoylation.

Its subcellular location is the cell membrane. The protein localises to the melanosome. The protein resides in the secreted. Cellular uptake of iron occurs via receptor-mediated endocytosis of ligand-occupied transferrin receptor into specialized endosomes. Endosomal acidification leads to iron release. The apotransferrin-receptor complex is then recycled to the cell surface with a return to neutral pH and the concomitant loss of affinity of apotransferrin for its receptor. Transferrin receptor is necessary for development of erythrocytes and the nervous system. A second ligand, the hereditary hemochromatosis protein HFE, competes for binding with transferrin for an overlapping C-terminal binding site. Positively regulates T and B cell proliferation through iron uptake. Acts as a lipid sensor that regulates mitochondrial fusion by regulating activation of the JNK pathway. When dietary levels of stearate (C18:0) are low, promotes activation of the JNK pathway, resulting in HUWE1-mediated ubiquitination and subsequent degradation of the mitofusin MFN2 and inhibition of mitochondrial fusion. When dietary levels of stearate (C18:0) are high, TFRC stearoylation inhibits activation of the JNK pathway and thus degradation of the mitofusin MFN2. Mediates uptake of NICOL1 into fibroblasts where it may regulate extracellular matrix production. Functionally, (Microbial infection) Acts as a receptor for new-world arenaviruses: Guanarito, Junin and Machupo virus. Its function is as follows. (Microbial infection) Acts as a host entry factor for rabies virus that hijacks the endocytosis of TFRC to enter cells. In terms of biological role, (Microbial infection) Acts as a host entry factor for SARS-CoV, MERS-CoV and SARS-CoV-2 viruses that hijack the endocytosis of TFRC to enter cells. The sequence is that of Transferrin receptor protein 1 (TFRC) from Homo sapiens (Human).